Consider the following 915-residue polypeptide: Metabotropic glutamate receptor 7 (915 aa).

Positions 1 to 34 are cleaved as a signal peptide; sequence MVQLGKLLRVLTLMKFPCCVLEVLLCVLAAAARG. Topologically, residues 35–590 are extracellular; that stretch reads QEMYAPHSIR…IIKLEWHSPW (556 aa). An intrachain disulfide couples Cys-67 to Cys-109. Residue Asn-98 is glycosylated (N-linked (GlcNAc...) asparagine). L-glutamate-binding positions include Ser-159, 180 to 182, Tyr-230, and Asp-314; that span reads AST. 7 disulfides stabilise this stretch: Cys-249–Cys-541, Cys-374–Cys-390, Cys-430–Cys-437, Cys-523–Cys-542, Cys-527–Cys-545, Cys-548–Cys-560, and Cys-563–Cys-576. Lys-407 is a binding site for L-glutamate. Asn-458 and Asn-486 each carry an N-linked (GlcNAc...) asparagine glycan. Asn-572 carries N-linked (GlcNAc...) asparagine glycosylation. The chain crosses the membrane as a helical span at residues 591-615; sequence AVIPVFLAMLGIIATIFVMATFIRY. At 616-627 the chain is on the cytoplasmic side; sequence NDTPIVRASGRE. Residues 628–648 form a helical membrane-spanning segment; sequence LSYVLLTGIFLCYIITFLMIA. Residues 649–654 are Extracellular-facing; the sequence is KPDVAV. Residues 655 to 675 traverse the membrane as a helical segment; that stretch reads CSFRRVFLGLGMCISYAALLT. Over 676 to 702 the chain is Cytoplasmic; sequence KTNRIYRIFEQGKKSVTAPRLISPTSQ. A helical transmembrane segment spans residues 703–723; the sequence is LAITSSLISVQLLGVFIWFGV. Residues 724 to 753 are Extracellular-facing; that stretch reads DPPNIIIDYDEHKTMNPEQARGVLKCDITD. The helical transmembrane segment at 754–775 threads the bilayer; the sequence is LQIICSLGYSILLMVTCTVYAI. Over 776-788 the chain is Cytoplasmic; the sequence is KTRGVPENFNEAK. A helical membrane pass occupies residues 789 to 810; sequence PIGFTMYTTCIVWLAFIPIFFG. The Extracellular portion of the chain corresponds to 811 to 825; the sequence is TAQSAEKLYIQTTTL. The helical transmembrane segment at 826–850 threads the bilayer; sequence TISMNLSASVALGMLYMPKVYIIIF. The Cytoplasmic portion of the chain corresponds to 851–915; it reads HPELNVQKRK…KYVSYNNLVI (65 aa). The segment at 874-895 is disordered; it reads SRLSHKPSDRPNGEAKTELCEN. A compositionally biased stretch (basic and acidic residues) spans 879–892; the sequence is KPSDRPNGEAKTEL. Ser-900 is modified (phosphoserine).

The protein belongs to the G-protein coupled receptor 3 family. In terms of assembly, homodimer. Interacts with PICK1. In terms of tissue distribution, widely distributed throughout the brain.

The protein resides in the cell membrane. G-protein coupled receptor activated by glutamate that regulates axon outgrowth through the MAPK-cAMP-PKA signaling pathway during neuronal development. Ligand binding causes a conformation change that triggers signaling via guanine nucleotide-binding proteins (G proteins) and modulates the activity of downstream effectors, such as adenylate cyclase that it inhibits. The protein is Metabotropic glutamate receptor 7 (Grm7) of Rattus norvegicus (Rat).